The sequence spans 533 residues: Dipeptide-binding protein (533 aa).

The N-terminal stretch at 1–24 (MRKILPLRAWLAAGLILGSPFSHA) is a signal peptide.

Belongs to the bacterial solute-binding protein 5 family.

The protein resides in the periplasm. Its function is as follows. Binds different dipeptides. Probably bind only L-amino acid containing dipeptides. The protein is Dipeptide-binding protein of Pseudomonas aeruginosa (strain ATCC 15692 / DSM 22644 / CIP 104116 / JCM 14847 / LMG 12228 / 1C / PRS 101 / PAO1).